A 478-amino-acid polypeptide reads, in one-letter code: Argininosuccinate synthase (478 aa).

ATP contacts are provided by residues 17–25 (AFSGGLDTS) and Ala-43. Residue Tyr-99 coordinates L-citrulline. Residues Gly-129 and Thr-131 each coordinate ATP. Thr-131, Asn-135, and Asp-136 together coordinate L-aspartate. Asn-135 contacts L-citrulline. Residue Asp-136 coordinates ATP. L-citrulline-binding residues include Arg-139 and Ser-192. Position 194 (Asp-194) interacts with ATP. Thr-201, Glu-203, and Glu-280 together coordinate L-citrulline.

It belongs to the argininosuccinate synthase family. Type 2 subfamily. As to quaternary structure, homotetramer.

The protein localises to the cytoplasm. The enzyme catalyses L-citrulline + L-aspartate + ATP = 2-(N(omega)-L-arginino)succinate + AMP + diphosphate + H(+). Its pathway is amino-acid biosynthesis; L-arginine biosynthesis; L-arginine from L-ornithine and carbamoyl phosphate: step 2/3. This Leifsonia xyli subsp. xyli (strain CTCB07) protein is Argininosuccinate synthase.